The sequence spans 327 residues: Phenylalanine--tRNA ligase alpha subunit (327 aa).

Position 252 (Glu-252) interacts with Mg(2+).

Belongs to the class-II aminoacyl-tRNA synthetase family. Phe-tRNA synthetase alpha subunit type 1 subfamily. As to quaternary structure, tetramer of two alpha and two beta subunits. Requires Mg(2+) as cofactor.

It localises to the cytoplasm. The enzyme catalyses tRNA(Phe) + L-phenylalanine + ATP = L-phenylalanyl-tRNA(Phe) + AMP + diphosphate + H(+). This Yersinia pestis bv. Antiqua (strain Antiqua) protein is Phenylalanine--tRNA ligase alpha subunit.